The sequence spans 477 residues: Transcription factor Sox-9-A (477 aa).

Disordered regions lie at residues 1 to 66 (MNLL…ETED) and 157 to 274 (EAER…FRDV). The segment covering 27–42 (SDDSAGSPCPSGSGSD) has biased composition (low complexity). Basic and acidic residues-rich tracts occupy residues 56–66 (GDQELKKETED) and 157–174 (EAER…DYKY). Lysine 61 participates in a covalent cross-link: Glycyl lysine isopeptide (Lys-Gly) (interchain with G-Cter in SUMO). Residues 63 to 103 (ETEDEKFPVCIREAVSQVLKGYDWTLVPMPVRVNGSSKNKP) are dimerization (DIM). The interval 63 to 103 (ETEDEKFPVCIREAVSQVLKGYDWTLVPMPVRVNGSSKNKP) is PQA. A DNA-binding region (HMG box) is located at residues 105-173 (VKRPMNAFMV…QHKKDHPDYK (69 aa)). Positions 211-222 (SPHSSSSMSEVH) are enriched in low complexity. The transactivation domain (TAM) stretch occupies residues 224–308 (PGEHSGQSQG…LPPNGHPGVG (85 aa)). 2 consecutive short sequence motifs (9aaTAD) follow at residues 276 to 285 (IGELSSEVIS) and 291 to 299 (DVNEFDQYL). Positions 301–384 (PNGHPGVGST…SDQQQQHSPQ (84 aa)) are disordered. Composition is skewed to polar residues over residues 308–328 (GSTQ…SATT) and 346–361 (HSLS…SQQR). The interval 361 to 477 (RTHIKTEQLS…QPVYTQLTRP (117 aa)) is transactivation domain (TAC). A Glycyl lysine isopeptide (Lys-Gly) (interchain with G-Cter in SUMO) cross-link involves residue lysine 365. Over residues 370-384 (SPSHYSDQQQQHSPQ) the composition is skewed to low complexity. The 9aaTAD 3 motif lies at 428-436 (SGLYSTFSY). Residues 446-477 (TPIADTTGVPSIPQTHSPQHWEQPVYTQLTRP) are disordered. The span at 453-477 (GVPSIPQTHSPQHWEQPVYTQLTRP) shows a compositional bias: polar residues.

Interacts with the sumoylation factors ube2i/ubc9 and sumo1. Sumoylated. Lys-365 is the major site of sumoylation, although sumoylation at Lys-61 also occurs. Sumoylation plays a key role in regulating formation of the neural crest and otic placode. In terms of tissue distribution, from mid-gastrula (stage 10.5-11), expressed in a ring around the blastopore, with expression decreasing toward the dorsal side. At stage 12, expression around the blastopore decreases and begins to increase lateral to the neural plate in the presumptive neural crest, where expression dramatically increases around stage 14. Also expressed in the otic placode as early as stage 13/14. By the tailbud stage expression is restricted to the otic cup and then throughout the otic vesicle, with more intense staining at the dorsal-most region, the prospective region of the semicircular canals and endolymphatic duct. At the early tailbud stage (stage 23), expressed in migrating cranial neural crest cells and in the trunk neural crest. Also expressed in the genital ridges, developing eye, nasal placode and prospective pineal gland. Around stage 25, expression is down-regulated in the trunk neural crest but persists in the migrating cranial crest cells as they populate the pharyngeal arches, otic placode, developing eye, genital ridges and notochord. By stage 31, expression remains strong in the pharyngeal arches. Also expressed in the pancreas; first expressed at stage 25 in the pancreatic anlagen, dorsally in diverticulum. As development proceeds, expression continues in pancreatic tissue, being restricted to ventral and dorsal pancreatic buds.

The protein resides in the nucleus. It localises to the cytoplasm. Transcription factor that plays a key role in chondrocytes differentiation and skeletal development. Specifically binds the 5'-ACAAAG-3' DNA motif present in enhancers and super-enhancers and promotes expression of genes important for chondrogenesis, including COL2A1. Plays a central role in successive steps of chondrocyte differentiation. Absolutely required for precartilaginous condensation, the first step in chondrogenesis during which skeletal progenitors differentiate into prechondrocytes. Together with SOX5 and SOX6, required for overt chondrogenesis when condensed prechondrocytes differentiate into early stage chondrocytes, the second step in chondrogenesis. Later, required to direct hypertrophic maturation and block osteoblast differentiation of growth plate chondrocytes: maintains chondrocyte columnar proliferation, delays prehypertrophy and then prevents osteoblastic differentiation of chondrocytes. Also required for chondrocyte hypertrophy, both indirectly, by keeping the lineage fate of chondrocytes, and directly, by remaining present in upper hypertrophic cells. Low lipid levels are the main nutritional determinant for chondrogenic commitment of skeletal progenitor cells: when lipids levels are low, FOXO transcription factors promote expression of SOX9, which induces chondrogenic commitment and suppresses fatty acid oxidation. In addition to cartilage development, also acts as a regulator of proliferation and differentiation in epithelial stem/progenitor cells. Involved in development of the cranial neural crest, which is fated to form skeletal elements. Also required for otic placode specification during inner ear development. The chain is Transcription factor Sox-9-A (sox9-a) from Xenopus laevis (African clawed frog).